Here is a 207-residue protein sequence, read N- to C-terminus: High frequency lysogenization protein HflD homolog (207 aa).

The protein belongs to the HflD family.

It localises to the cytoplasm. It is found in the cell inner membrane. The sequence is that of High frequency lysogenization protein HflD homolog from Tolumonas auensis (strain DSM 9187 / NBRC 110442 / TA 4).